A 410-amino-acid chain; its full sequence is Scarecrow-like protein 32 (410 aa).

The GRAS domain maps to Leu-18–Val-408. Positions Asn-25 to Ser-88 are leucine repeat I (LRI). The tract at residues Leu-107–Tyr-188 is VHIID. A VHIID motif is present at residues Val-138–Asp-142. The interval Glu-190 to Arg-227 is leucine repeat II (LRII). The PFYRE stretch occupies residues Leu-237 to Asn-329. Positions Ala-332–Val-408 are SAW.

Belongs to the GRAS family. As to expression, expressed in seedlings, leaves and flowers.

It localises to the nucleus. Its function is as follows. Probable transcription factor involved in plant development. This is Scarecrow-like protein 32 (SCL32) from Arabidopsis thaliana (Mouse-ear cress).